A 254-amino-acid chain; its full sequence is CDP-diacylglycerol pyrophosphatase (254 aa).

The chain crosses the membrane as a helical span at residues 6-26 (YFLLALLVAILAALAGGYYWL).

This sequence belongs to the Cdh family.

Its subcellular location is the cell inner membrane. It carries out the reaction a CDP-1,2-diacyl-sn-glycerol + H2O = a 1,2-diacyl-sn-glycero-3-phosphate + CMP + 2 H(+). Its pathway is phospholipid metabolism; CDP-diacylglycerol degradation; phosphatidate from CDP-diacylglycerol: step 1/1. The protein is CDP-diacylglycerol pyrophosphatase of Klebsiella pneumoniae (strain 342).